A 536-amino-acid polypeptide reads, in one-letter code: Phosphoenolpyruvate carboxykinase (ATP) (536 aa).

Substrate contacts are provided by Arg61, Tyr195, and Lys201. ATP-binding positions include Lys201, His220, and 236–244 (GLSGTGKTT). Mn(2+) contacts are provided by Lys201 and His220. Residue Asp257 participates in Mn(2+) binding. Glu285, Arg322, and Thr447 together coordinate ATP. Arg322 serves as a coordination point for substrate.

It belongs to the phosphoenolpyruvate carboxykinase (ATP) family. Mn(2+) is required as a cofactor.

The protein localises to the cytoplasm. It catalyses the reaction oxaloacetate + ATP = phosphoenolpyruvate + ADP + CO2. Its pathway is carbohydrate biosynthesis; gluconeogenesis. Involved in the gluconeogenesis. Catalyzes the conversion of oxaloacetate (OAA) to phosphoenolpyruvate (PEP) through direct phosphoryl transfer between the nucleoside triphosphate and OAA. The chain is Phosphoenolpyruvate carboxykinase (ATP) from Brucella suis biovar 1 (strain 1330).